A 49-amino-acid polypeptide reads, in one-letter code: MRVNITLECTSCKERNYLTNKNKRNNPDRLEKQKYCPRERKVTLHRETK.

The tract at residues 20–49 (NKNKRNNPDRLEKQKYCPRERKVTLHRETK) is disordered. Basic and acidic residues predominate over residues 25-49 (NNPDRLEKQKYCPRERKVTLHRETK).

Belongs to the bacterial ribosomal protein bL33 family.

This is Large ribosomal subunit protein bL33C (rpmG3) from Enterococcus faecalis (strain ATCC 700802 / V583).